Consider the following 710-residue polypeptide: Ephexin-1 (710 aa).

Basic and acidic residues-rich tracts occupy residues 1 to 11 (METRESEDLEK) and 26 to 41 (EPAKVKPELLPEKEET). Residues 1-143 (METRESEDLE…PGNGATPEEW (143 aa)) are disordered. The tract at residues 1-273 (METRESEDLE…LEILQPEEIK (273 aa)) is regulatory region; modulates activity toward RHOA, RAC1 and CDC42. 2 stretches are compositionally biased toward polar residues: residues 89-102 (ADSQDNGKSVNEPL) and 127-136 (MSESSSTPGN). Tyrosine 179 carries the phosphotyrosine modification. The tract at residues 194-236 (RRQQDAEIEDNTNGSPASEDTPEEEEEEEEEEEPASPPERKTL) is disordered. Acidic residues predominate over residues 213 to 227 (DTPEEEEEEEEEEEP). One can recognise a DH domain in the interval 273–457 (KLQEAMFELV…EMVVKACNEG (185 aa)). Residues 489–601 (WLLKQGELQQ…WMTSLAPNRR (113 aa)) enclose the PH domain. The SH3 domain occupies 612-673 (LDCPQVQCVH…PSSMTEEILN (62 aa)). Over residues 687 to 699 (VHKMDDPQRSQNK) the composition is skewed to basic and acidic residues. The segment at 687 to 710 (VHKMDDPQRSQNKDRRKLGSRNRQ) is disordered. Positions 700 to 710 (DRRKLGSRNRQ) are enriched in basic residues.

In terms of assembly, interacts with CDK5R1 and EPHA4; activated by EPHA4 through the CDK5 kinase. Src-dependent phosphorylation at Tyr-179 upon EPHA4 activation increases the guanine exchange factor activity toward RHOA. Phosphorylation by CDK5 upon EPHA4 activation by EFNA1 may regulate dendritic spine morphogenesis. Highly expressed in brain specifically in caudate nucleus and to a lower extent in amygdala and hippocampus. Also detected in lung.

Its subcellular location is the cytoplasm. It is found in the membrane. It localises to the cell projection. The protein resides in the growth cone. In terms of biological role, acts as a guanine nucleotide exchange factor (GEF) which differentially activates the GTPases RHOA, RAC1 and CDC42. Plays a role in axon guidance regulating ephrin-induced growth cone collapse and dendritic spine morphogenesis. Upon activation by ephrin through EPHA4, the GEF activity switches toward RHOA resulting in its activation. Activated RHOA promotes cone retraction at the expense of RAC1- and CDC42-stimulated growth cone extension. This Homo sapiens (Human) protein is Ephexin-1 (NGEF).